We begin with the raw amino-acid sequence, 306 residues long: Acetaldehyde dehydrogenase 3 (306 aa).

C131 acts as the Acyl-thioester intermediate in catalysis. NAD(+) is bound by residues 162 to 170 (SVGPGTRKN) and N273.

This sequence belongs to the acetaldehyde dehydrogenase family.

It catalyses the reaction acetaldehyde + NAD(+) + CoA = acetyl-CoA + NADH + H(+). The sequence is that of Acetaldehyde dehydrogenase 3 from Burkholderia lata (strain ATCC 17760 / DSM 23089 / LMG 22485 / NCIMB 9086 / R18194 / 383).